Here is a 342-residue protein sequence, read N- to C-terminus: Succinylglutamate desuccinylase (342 aa).

Zn(2+) contacts are provided by histidine 63, glutamate 66, and histidine 155. The active site involves glutamate 219.

Belongs to the AspA/AstE family. Succinylglutamate desuccinylase subfamily. It depends on Zn(2+) as a cofactor.

It catalyses the reaction N-succinyl-L-glutamate + H2O = L-glutamate + succinate. It participates in amino-acid degradation; L-arginine degradation via AST pathway; L-glutamate and succinate from L-arginine: step 5/5. Transforms N(2)-succinylglutamate into succinate and glutamate. This Vibrio cholerae serotype O1 (strain ATCC 39541 / Classical Ogawa 395 / O395) protein is Succinylglutamate desuccinylase.